Here is a 502-residue protein sequence, read N- to C-terminus: ATP synthase subunit alpha (502 aa).

169-176 (GDRQTGKT) is an ATP binding site.

This sequence belongs to the ATPase alpha/beta chains family. F-type ATPases have 2 components, CF(1) - the catalytic core - and CF(0) - the membrane proton channel. CF(1) has five subunits: alpha(3), beta(3), gamma(1), delta(1), epsilon(1). CF(0) has three main subunits: a(1), b(2) and c(9-12). The alpha and beta chains form an alternating ring which encloses part of the gamma chain. CF(1) is attached to CF(0) by a central stalk formed by the gamma and epsilon chains, while a peripheral stalk is formed by the delta and b chains.

The protein localises to the cell inner membrane. It carries out the reaction ATP + H2O + 4 H(+)(in) = ADP + phosphate + 5 H(+)(out). Produces ATP from ADP in the presence of a proton gradient across the membrane. The alpha chain is a regulatory subunit. This is ATP synthase subunit alpha from Geotalea uraniireducens (strain Rf4) (Geobacter uraniireducens).